The primary structure comprises 63 residues: Light-harvesting protein B-800/850 alpha chain (63 aa).

Topologically, residues 1–14 (MNNAKMWLVVKPTV) are cytoplasmic. Residues 15-35 (GIPLFLVACAIASFLVHLMLV) form a helical membrane-spanning segment. A bacteriochlorophyll is bound at residue His-31. Residues 36 to 63 (LTTGWMGDYYSGSFEAASLVSNATTLLS) are Periplasmic-facing.

It belongs to the antenna complex alpha subunit family. As to quaternary structure, the core complex is formed by different alpha and beta chains, binding bacteriochlorophyll molecules, and arranged most probably in tetrameric structures disposed around the reaction center. The non-pigmented gamma chains may constitute additional components.

The protein localises to the cell inner membrane. Antenna complexes are light-harvesting systems, which transfer the excitation energy to the reaction centers. The sequence is that of Light-harvesting protein B-800/850 alpha chain (pucA) from Rhodovulum sulfidophilum (Rhodobacter sulfidophilus).